The primary structure comprises 198 residues: Recombination protein RecR (198 aa).

The C4-type zinc-finger motif lies at 56 to 71 (CTTCGNIDTHDPCAIC). The Toprim domain maps to 79–174 (RSLCVVEEVS…RLTQLAHGLP (96 aa)).

It belongs to the RecR family.

May play a role in DNA repair. It seems to be involved in an RecBC-independent recombinational process of DNA repair. It may act with RecF and RecO. This chain is Recombination protein RecR, found in Sphingopyxis alaskensis (strain DSM 13593 / LMG 18877 / RB2256) (Sphingomonas alaskensis).